The primary structure comprises 119 residues: Phosphoribosyl-AMP cyclohydrolase (119 aa).

D77 is a Mg(2+) binding site. Residue C78 participates in Zn(2+) binding. The Mg(2+) site is built by D79 and D81. 2 residues coordinate Zn(2+): C94 and C101.

This sequence belongs to the PRA-CH family. As to quaternary structure, homodimer. The cofactor is Mg(2+). It depends on Zn(2+) as a cofactor.

The protein localises to the cytoplasm. The enzyme catalyses 1-(5-phospho-beta-D-ribosyl)-5'-AMP + H2O = 1-(5-phospho-beta-D-ribosyl)-5-[(5-phospho-beta-D-ribosylamino)methylideneamino]imidazole-4-carboxamide. It participates in amino-acid biosynthesis; L-histidine biosynthesis; L-histidine from 5-phospho-alpha-D-ribose 1-diphosphate: step 3/9. Its function is as follows. Catalyzes the hydrolysis of the adenine ring of phosphoribosyl-AMP. The sequence is that of Phosphoribosyl-AMP cyclohydrolase from Cereibacter sphaeroides (strain ATCC 17025 / ATH 2.4.3) (Rhodobacter sphaeroides).